A 256-amino-acid chain; its full sequence is Thiazole synthase (256 aa).

Catalysis depends on K95, which acts as the Schiff-base intermediate with DXP. Residues G156, 182-183 (AG), and 204-205 (NT) each bind 1-deoxy-D-xylulose 5-phosphate.

Belongs to the ThiG family. As to quaternary structure, homotetramer. Forms heterodimers with either ThiH or ThiS.

It is found in the cytoplasm. It carries out the reaction [ThiS sulfur-carrier protein]-C-terminal-Gly-aminoethanethioate + 2-iminoacetate + 1-deoxy-D-xylulose 5-phosphate = [ThiS sulfur-carrier protein]-C-terminal Gly-Gly + 2-[(2R,5Z)-2-carboxy-4-methylthiazol-5(2H)-ylidene]ethyl phosphate + 2 H2O + H(+). The protein operates within cofactor biosynthesis; thiamine diphosphate biosynthesis. In terms of biological role, catalyzes the rearrangement of 1-deoxy-D-xylulose 5-phosphate (DXP) to produce the thiazole phosphate moiety of thiamine. Sulfur is provided by the thiocarboxylate moiety of the carrier protein ThiS. In vitro, sulfur can be provided by H(2)S. This Escherichia fergusonii (strain ATCC 35469 / DSM 13698 / CCUG 18766 / IAM 14443 / JCM 21226 / LMG 7866 / NBRC 102419 / NCTC 12128 / CDC 0568-73) protein is Thiazole synthase.